The chain runs to 105 residues: MKVHKGDTVLVVSGKDKGAKGKVIQAYPTRNKVLVEGVNRIKKHTAVSSNERGASSGGIVTQEAPIHVSNVMVVDSDGNPTRIGYRVDEETGKKVRVSKRNGKDI.

It belongs to the universal ribosomal protein uL24 family. In terms of assembly, part of the 50S ribosomal subunit.

One of two assembly initiator proteins, it binds directly to the 5'-end of the 23S rRNA, where it nucleates assembly of the 50S subunit. In terms of biological role, one of the proteins that surrounds the polypeptide exit tunnel on the outside of the subunit. In Mycobacterium sp. (strain JLS), this protein is Large ribosomal subunit protein uL24.